We begin with the raw amino-acid sequence, 657 residues long: Histidine ammonia-lyase (657 aa).

The 5-imidazolinone (Ala-Gly) cross-link spans Ala253–Gly255. Position 254 is a 2,3-didehydroalanine (Ser) (Ser254). Thr396 is subject to Phosphothreonine. Ser635 carries the post-translational modification Phosphoserine. Thr637 carries the phosphothreonine modification. Residue Ser648 is modified to Phosphoserine.

It belongs to the PAL/histidase family. Contains an active site 4-methylidene-imidazol-5-one (MIO), which is formed autocatalytically by cyclization and dehydration of residues Ala-Ser-Gly.

It catalyses the reaction L-histidine = trans-urocanate + NH4(+). It participates in amino-acid degradation; L-histidine degradation into L-glutamate; N-formimidoyl-L-glutamate from L-histidine: step 1/3. This Bos taurus (Bovine) protein is Histidine ammonia-lyase (HAL).